Reading from the N-terminus, the 275-residue chain is Large ribosomal subunit protein uL2c (275 aa).

Disordered stretches follow at residues M1–K30 and M225–K275. Over residues Q21–K30 the composition is skewed to polar residues.

The protein belongs to the universal ribosomal protein uL2 family. In terms of assembly, part of the 50S ribosomal subunit.

The protein resides in the plastid. It is found in the chloroplast. This Illicium oligandrum (Star anise) protein is Large ribosomal subunit protein uL2c (rpl2).